The primary structure comprises 151 residues: Caveolin-3 (151 aa).

The Cytoplasmic segment spans residues 1 to 83; that stretch reads MMAEEHTDLE…RLLSTLLGVP (83 aa). Lys-38 participates in a covalent cross-link: Glycyl lysine isopeptide (Lys-Gly) (interchain with G-Cter in SUMO3). The segment at 64–114 is required for interaction with DAG1; the sequence is TFTVSKYWCYRLLSTLLGVPLALLWGFLFACISFCHIWAVVPCIKSYLIEI. Residues 84–104 constitute an intramembrane region (helical); sequence LALLWGFLFACISFCHIWAVV. At 105-151 the chain is on the cytoplasmic side; that stretch reads PCIKSYLIEIQCISHIYSLCIRTFCNPLFAALGQVCSSIKVVLRKEV.

It belongs to the caveolin family. As to quaternary structure, homooligomer. Interacts with DLG1 and KCNA5; forms a ternary complex. Interacts with TRIM72. Interacts with MUSK; may regulate MUSK signaling. Interacts with DAG1 (via its C-terminal); the interaction prevents binding of DAG1 with DMD. Interacts with DYSF. Interacts with POPDC1. Interacts with CAVIN1 and CAVIN2. Interacts with CAVIN4. Sumoylation with SUMO3 by PIAS4 may reduce agonist-induced internalization and desensitization of adrenergic receptor ABRD2. Expressed predominantly in muscle.

The protein resides in the golgi apparatus membrane. It localises to the cell membrane. The protein localises to the membrane. Its subcellular location is the caveola. It is found in the sarcolemma. May act as a scaffolding protein within caveolar membranes. Interacts directly with G-protein alpha subunits and can functionally regulate their activity. May also regulate voltage-gated potassium channels. Plays a role in the sarcolemma repair mechanism of both skeletal muscle and cardiomyocytes that permits rapid resealing of membranes disrupted by mechanical stress. Mediates the recruitment of CAVIN2 and CAVIN3 proteins to the caveolae. In Homo sapiens (Human), this protein is Caveolin-3 (CAV3).